Consider the following 55-residue polypeptide: MLRYAVIFFIIALIAALFGFGGIAAGAAGIAKILFMIFVVLFVVSLFWGLVAGRG.

Helical transmembrane passes span 5-25 and 33-53; these read AVIFFIIALIAALFGFGGIAA and ILFMIFVVLFVVSLFWGLVAG.

Belongs to the UPF0391 family.

It is found in the cell membrane. The polypeptide is UPF0391 membrane protein RSp1666 (Ralstonia nicotianae (strain ATCC BAA-1114 / GMI1000) (Ralstonia solanacearum)).